A 671-amino-acid chain; its full sequence is Sodium, potassium, lithium and rubidium/H(+) antiporter (671 aa).

11 helical membrane passes run 7 to 29 (VLVLLALIASSNIINRFVPFIPV), 46 to 66 (GLHISLNPELFFVLFIAPLLF), 83 to 103 (PILLLALGLVFATVIVAGYTI), 110 to 130 (IPLPAAFALAAILSPTDVVAV), 156 to 176 (ASGLVAFKFAIAATVTGAFSI), 182 to 202 (SFVLIAAGGLLTGFILSFFII), 228 to 248 (FVIYLAAEEIGVSGILAVVAG), 276 to 296 (IILFILNGLVFVILGLQIPDV), 315 to 335 (ILIITLCLMILRFLWVWLFWA), 364 to 384 (GAVTLAGAFSIPFTLADGSPF), and 389 to 409 (LIIFLAAGVILCTLILASVLL).

It belongs to the monovalent cation:proton antiporter 1 (CPA1) transporter (TC 2.A.36) family. Nhak (TC 2.A.36.3.2) subfamily.

It is found in the cell membrane. Its function is as follows. Transporter involved in the efflux of sodium, potassium, lithium and rubidium. The protein is Sodium, potassium, lithium and rubidium/H(+) antiporter (nhaK) of Bacillus pumilus (strain SAFR-032).